The following is a 565-amino-acid chain: Anaphase-promoting complex subunit 7 (565 aa).

TPR repeat units lie at residues 101-134 (EIEVKYKMAECYTMLKLDKDAIAVLDGIPSRQRT), 169-202 (LDAILGLLSLSVKGAEVASMTMNVIQTVPNLDWL), 203-236 (SVWIKAYAFVHTGDNSRAINTICSLEKKSLLRDN), 237-270 (VDLLGSLADLYFRAGDSKNSVLKFEQAQMLDPYL), 339-372 (VQALLLKGAALRNMGRVQEAIIHFREAIRLAPCR), 373-406 (LDCYEGLIECYLASNSIREAMVMANNVYKTLGAN), 407-439 (AQTLTLLATVCLEDPVTQEKAKTLLDKALAQRP), 442-474 (VKAVVKKAELLSREQKYEDGIALLRNALANQSD), 475-508 (CVLHRILGDFLVAVNEYQEAMDQYSIALSLDPND), and 509-531 (QKSLEGMQKMEKEESPTDATQEE). Lys-229 bears the N6-acetyllysine mark. Positions 513–523 (EGMQKMEKEES) are enriched in basic and acidic residues. The interval 513 to 565 (EGMQKMEKEESPTDATQEEDVDDMEGSGEEGDLEGSDSEAAQWADQEQWFGMQ) is disordered. Residues 528–549 (TQEEDVDDMEGSGEEGDLEGSD) are compositionally biased toward acidic residues.

Belongs to the APC7 family. As to quaternary structure, V-shaped homodimer. The mammalian APC/C is composed at least of 14 distinct subunits ANAPC1, ANAPC2, CDC27/APC3, ANAPC4, ANAPC5, CDC16/APC6, ANAPC7, CDC23/APC8, ANAPC10, ANAPC11, CDC26/APC12, ANAPC13, ANAPC15 and ANAPC16 that assemble into a complex of at least 19 chains with a combined molecular mass of around 1.2 MDa; APC/C interacts with FZR1 and FBXO5.

The protein localises to the cytoplasm. It localises to the cytoskeleton. The protein resides in the nucleus. Its subcellular location is the spindle. It participates in protein modification; protein ubiquitination. Component of the anaphase promoting complex/cyclosome (APC/C), a cell cycle-regulated E3 ubiquitin ligase that controls progression through mitosis and the G1 phase of the cell cycle. The APC/C complex acts by mediating ubiquitination and subsequent degradation of target proteins: it mainly mediates the formation of 'Lys-11'-linked polyubiquitin chains and, to a lower extent, the formation of 'Lys-48'- and 'Lys-63'-linked polyubiquitin chains. The APC/C complex catalyzes assembly of branched 'Lys-11'-/'Lys-48'-linked branched ubiquitin chains on target proteins. APC7 is not required for the assembly of the APC/C complex, but has an enzyme-substrate adapter activity mediating the processive ubiquitination of specific substrates. Involved in brain development through the specific ubiquitination and clearance of MKI67 from constitutive heterochromatin after neuronal progenitors exit mitosis. This is Anaphase-promoting complex subunit 7 (Anapc7) from Mus musculus (Mouse).